The following is a 517-amino-acid chain: tRNA-2-methylthio-N(6)-dimethylallyladenosine synthase (517 aa).

An MTTase N-terminal domain is found at 18 to 137 (RTYQVRTYGC…LPTLLDRARH (120 aa)). Cys27, Cys66, Cys100, Cys174, Cys178, and Cys181 together coordinate [4Fe-4S] cluster. The 238-residue stretch at 160-397 (RESDYAAWVS…ELQEQICMEE (238 aa)) folds into the Radical SAM core domain. The region spanning 399-470 (RVLIGRIVEL…PHHLIADAGI (72 aa)) is the TRAM domain.

It belongs to the methylthiotransferase family. MiaB subfamily. Monomer. The cofactor is [4Fe-4S] cluster.

Its subcellular location is the cytoplasm. The enzyme catalyses N(6)-dimethylallyladenosine(37) in tRNA + (sulfur carrier)-SH + AH2 + 2 S-adenosyl-L-methionine = 2-methylsulfanyl-N(6)-dimethylallyladenosine(37) in tRNA + (sulfur carrier)-H + 5'-deoxyadenosine + L-methionine + A + S-adenosyl-L-homocysteine + 2 H(+). In terms of biological role, catalyzes the methylthiolation of N6-(dimethylallyl)adenosine (i(6)A), leading to the formation of 2-methylthio-N6-(dimethylallyl)adenosine (ms(2)i(6)A) at position 37 in tRNAs that read codons beginning with uridine. This Mycobacterium leprae (strain TN) protein is tRNA-2-methylthio-N(6)-dimethylallyladenosine synthase.